Consider the following 167-residue polypeptide: Small ribosomal subunit protein uS5 (167 aa).

The 64-residue stretch at 12–75 (LEDQVVSINR…DAAKKSLIEV (64 aa)) folds into the S5 DRBM domain.

The protein belongs to the universal ribosomal protein uS5 family. Part of the 30S ribosomal subunit. Contacts proteins S4 and S8.

In terms of biological role, with S4 and S12 plays an important role in translational accuracy. Located at the back of the 30S subunit body where it stabilizes the conformation of the head with respect to the body. This chain is Small ribosomal subunit protein uS5, found in Lacticaseibacillus paracasei (strain ATCC 334 / BCRC 17002 / CCUG 31169 / CIP 107868 / KCTC 3260 / NRRL B-441) (Lactobacillus paracasei).